The chain runs to 226 residues: Ribosome-recycling factor, mitochondrial (226 aa).

It belongs to the RRF family.

Its subcellular location is the mitochondrion. Necessary for protein synthesis in mitochondria. Functions as a ribosome recycling factor in mitochondria. The polypeptide is Ribosome-recycling factor, mitochondrial (RRF1) (Eremothecium gossypii (strain ATCC 10895 / CBS 109.51 / FGSC 9923 / NRRL Y-1056) (Yeast)).